The chain runs to 242 residues: Coiled-coil domain-containing protein 107 (242 aa).

The N-terminal stretch at 1–24 (MEGAGPVLSILGLLLVSAPFGVLG) is a signal peptide. Positions 27–62 (PSADLGAHPERGSQVSPGTTEPRRQPPPKDQRERAR) are disordered. Residues 47-62 (EPRRQPPPKDQRERAR) show a composition bias toward basic and acidic residues. A helical transmembrane segment spans residues 65 to 85 (SLSLGALYTAAVVAFVLFKCL). Positions 97-132 (EKNKKKSSQSEQQLVQLTQQLAQTEQHLNHLMTQLD) form a coiled coil. The tract at residues 186–210 (KEDQEAGNSQAWEEPITWSPETRNL) is disordered.

The protein resides in the membrane. The sequence is that of Coiled-coil domain-containing protein 107 (Ccdc107) from Mus musculus (Mouse).